The chain runs to 202 residues: Imidazoleglycerol-phosphate dehydratase (202 aa).

This sequence belongs to the imidazoleglycerol-phosphate dehydratase family.

It localises to the cytoplasm. It catalyses the reaction D-erythro-1-(imidazol-4-yl)glycerol 3-phosphate = 3-(imidazol-4-yl)-2-oxopropyl phosphate + H2O. It participates in amino-acid biosynthesis; L-histidine biosynthesis; L-histidine from 5-phospho-alpha-D-ribose 1-diphosphate: step 6/9. The polypeptide is Imidazoleglycerol-phosphate dehydratase (Clavibacter michiganensis subsp. michiganensis (strain NCPPB 382)).